The chain runs to 320 residues: Cytochrome f (320 aa).

An N-terminal signal peptide occupies residues 1 to 35 (MQTRNAFSWLKKQITRSISVSLMIYILTRTSISSA). Heme-binding residues include Tyr-36, Cys-56, Cys-59, and His-60. A helical transmembrane segment spans residues 286–306 (AQGLLFFLASVILAQIFLVLK).

This sequence belongs to the cytochrome f family. The 4 large subunits of the cytochrome b6-f complex are cytochrome b6, subunit IV (17 kDa polypeptide, petD), cytochrome f and the Rieske protein, while the 4 small subunits are PetG, PetL, PetM and PetN. The complex functions as a dimer. The cofactor is heme.

It is found in the plastid. Its subcellular location is the chloroplast thylakoid membrane. In terms of biological role, component of the cytochrome b6-f complex, which mediates electron transfer between photosystem II (PSII) and photosystem I (PSI), cyclic electron flow around PSI, and state transitions. The protein is Cytochrome f of Nicotiana tomentosiformis (Tobacco).